A 469-amino-acid chain; its full sequence is Probable Xaa-Pro aminopeptidase PEPP (469 aa).

4 residues coordinate Mn(2+): Asp-264, Asp-275, Glu-398, and Glu-438.

Belongs to the peptidase M24B family. Mn(2+) is required as a cofactor.

The catalysed reaction is Release of any N-terminal amino acid, including proline, that is linked to proline, even from a dipeptide or tripeptide.. Functionally, catalyzes the removal of a penultimate prolyl residue from the N-termini of peptides. This is Probable Xaa-Pro aminopeptidase PEPP (PEPP) from Ajellomyces capsulatus (strain H143) (Darling's disease fungus).